The sequence spans 231 residues: Dephospho-CoA kinase domain-containing protein (231 aa).

In terms of domain architecture, DPCK spans 3–207 (LVGLTGGIAS…HSLEYLPLRL (205 aa)). 8–15 (GGIASGKS) provides a ligand contact to ATP.

Belongs to the CoaE family.

This is Dephospho-CoA kinase domain-containing protein (DCAKD) from Bos taurus (Bovine).